Consider the following 495-residue polypeptide: Aspartyl/glutamyl-tRNA(Asn/Gln) amidotransferase subunit B (495 aa).

It belongs to the GatB/GatE family. GatB subfamily. As to quaternary structure, heterotrimer of A, B and C subunits.

The catalysed reaction is L-glutamyl-tRNA(Gln) + L-glutamine + ATP + H2O = L-glutaminyl-tRNA(Gln) + L-glutamate + ADP + phosphate + H(+). It carries out the reaction L-aspartyl-tRNA(Asn) + L-glutamine + ATP + H2O = L-asparaginyl-tRNA(Asn) + L-glutamate + ADP + phosphate + 2 H(+). Allows the formation of correctly charged Asn-tRNA(Asn) or Gln-tRNA(Gln) through the transamidation of misacylated Asp-tRNA(Asn) or Glu-tRNA(Gln) in organisms which lack either or both of asparaginyl-tRNA or glutaminyl-tRNA synthetases. The reaction takes place in the presence of glutamine and ATP through an activated phospho-Asp-tRNA(Asn) or phospho-Glu-tRNA(Gln). In Methanosarcina mazei (strain ATCC BAA-159 / DSM 3647 / Goe1 / Go1 / JCM 11833 / OCM 88) (Methanosarcina frisia), this protein is Aspartyl/glutamyl-tRNA(Asn/Gln) amidotransferase subunit B.